Consider the following 397-residue polypeptide: Decapping and exoribonuclease protein (397 aa).

Substrate contacts are provided by residues Arg-58, Glu-101, and 131–133; that span reads WRG. Residue Glu-192 participates in Mg(2+) binding. Residues Cys-217 and Glu-234 each contribute to the substrate site. Mg(2+) is bound by residues Glu-234, Asp-236, Glu-253, and Leu-254. Substrate is bound by residues Lys-255 and Gln-280. At Thr-392 the chain carries Phosphothreonine. Ser-394 bears the Phosphoserine mark.

Belongs to the DXO/Dom3Z family. Requires Mg(2+) as cofactor.

It localises to the nucleus. It carries out the reaction a 5'-end triphospho-ribonucleoside in mRNA + H2O = a 5'-end phospho-ribonucleoside in mRNA + diphosphate + H(+). It catalyses the reaction a 5'-end NAD(+)-phospho-ribonucleoside in mRNA + H2O = a 5'-end phospho-ribonucleoside in mRNA + NAD(+) + H(+). The enzyme catalyses a 5'-end NAD(+)-phospho-ribonucleoside in snoRNA + H2O = a 5'-end phospho-ribonucleoside in snoRNA + NAD(+) + H(+). The catalysed reaction is a 5'-end (N(7)-methyl 5'-triphosphoguanosine)-ribonucleoside-ribonucleotide in mRNA + H2O = a (N(7)-methyl 5'-triphosphoguanosine)-nucleoside + a 5'-end phospho-ribonucleoside in mRNA + H(+). It carries out the reaction a 5'-end FAD-phospho-ribonucleoside in mRNA + H2O = a 5'-end phospho-ribonucleoside in mRNA + FAD + H(+). It catalyses the reaction a 5'-end CoA-ribonucleoside in mRNA + H2O = 3'-dephospho-CoA + a 5'-end phospho-ribonucleoside in mRNA + H(+). Decapping enzyme for NAD-capped RNAs: specifically hydrolyzes the nicotinamide adenine dinucleotide (NAD) cap from a subset of RNAs by removing the entire NAD moiety from the 5'-end of an NAD-capped RNA. The NAD-cap is present at the 5'-end of some RNAs and snoRNAs. In contrast to the canonical 5'-end N7 methylguanosine (m7G) cap, the NAD cap promotes mRNA decay. Preferentially acts on NAD-capped transcripts in response to environmental stress. Also acts as a non-canonical decapping enzyme that removes the entire cap structure of m7G capped or incompletely capped RNAs and mediates their subsequent degradation. Specifically degrades pre-mRNAs with a defective 5'-end m7G cap and is part of a pre-mRNA capping quality control. Has decapping activity toward incomplete 5'-end m7G cap mRNAs such as unmethylated 5'-end-capped RNA (cap0), while it has no activity toward 2'-O-ribose methylated m7G cap (cap1). In contrast to canonical decapping enzymes DCP2 and NUDT16, which cleave the cap within the triphosphate linkage, the decapping activity releases the entire cap structure GpppN and a 5'-end monophosphate RNA. Also has 5'-3' exoribonuclease activities: The 5'-end monophosphate RNA is then degraded by the 5'-3' exoribonuclease activity, enabling this enzyme to decap and degrade incompletely capped mRNAs. Also possesses RNA 5'-pyrophosphohydrolase activity by hydrolyzing the 5'-end triphosphate to release pyrophosphates. Exhibits decapping activity towards FAD-capped RNAs. Exhibits decapping activity towards dpCoA-capped RNAs in vitro. This chain is Decapping and exoribonuclease protein, found in Rattus norvegicus (Rat).